The following is a 667-amino-acid chain: DNA ligase (667 aa).

Residues 32–36 (DKDYD) and 80–81 (SL) each bind NAD(+). Lysine 121 serves as the catalytic N6-AMP-lysine intermediate. Positions 143, 178, and 314 each coordinate NAD(+). Positions 407, 410, 423, and 429 each coordinate Zn(2+). Residues 587–667 (IVESIFKDKT…EFEKMLGRES (81 aa)) enclose the BRCT domain.

The protein belongs to the NAD-dependent DNA ligase family. LigA subfamily. The cofactor is Mg(2+). Mn(2+) serves as cofactor.

The enzyme catalyses NAD(+) + (deoxyribonucleotide)n-3'-hydroxyl + 5'-phospho-(deoxyribonucleotide)m = (deoxyribonucleotide)n+m + AMP + beta-nicotinamide D-nucleotide.. In terms of biological role, DNA ligase that catalyzes the formation of phosphodiester linkages between 5'-phosphoryl and 3'-hydroxyl groups in double-stranded DNA using NAD as a coenzyme and as the energy source for the reaction. It is essential for DNA replication and repair of damaged DNA. This chain is DNA ligase, found in Clostridium botulinum (strain Alaska E43 / Type E3).